The primary structure comprises 158 residues: Transcription elongation factor GreA (158 aa).

Residues 47–75 (ENSEYDAAKDEQAFVEQRITQVEKMIRNA) adopt a coiled-coil conformation.

This sequence belongs to the GreA/GreB family.

In terms of biological role, necessary for efficient RNA polymerase transcription elongation past template-encoded arresting sites. The arresting sites in DNA have the property of trapping a certain fraction of elongating RNA polymerases that pass through, resulting in locked ternary complexes. Cleavage of the nascent transcript by cleavage factors such as GreA or GreB allows the resumption of elongation from the new 3'terminus. GreA releases sequences of 2 to 3 nucleotides. This chain is Transcription elongation factor GreA, found in Oceanobacillus iheyensis (strain DSM 14371 / CIP 107618 / JCM 11309 / KCTC 3954 / HTE831).